A 292-amino-acid polypeptide reads, in one-letter code: MAACIAAGYCAAMGLGRSFQAARTLLPKPASIACRVHAGPVRQQSTGPSEPGAFQPPPKPVILDKRRPVELERRFLSPEFIPPRGRTDPLKFQMERKDMLERRKVLHIPEFYVGSILRVTTADPYASGKISQFLGICIQRSGRGLGATFILRNVIEGQGVEICFELYNPRVQEIQVVKLEKRLDDSLLYLRDALPEYSTFDVNMKPEVQEPNQKVPVNELKVKMKPKPWSKRWERPNFNIKGIRFDLCLTEEQMKEAQKWSQPWLEFDMMREYDTSKIEAAIWKEIEASKRS.

The disordered stretch occupies residues 40–61 (PVRQQSTGPSEPGAFQPPPKPV). Ser77 is modified (phosphoserine).

Belongs to the bacterial ribosomal protein bL19 family. Component of the mitochondrial ribosome large subunit (39S) which comprises a 16S rRNA and about 50 distinct proteins.

The protein localises to the mitochondrion. This chain is Large ribosomal subunit protein bL19m (MRPL19), found in Pongo abelii (Sumatran orangutan).